Consider the following 876-residue polypeptide: MSQMNVEQFASELGVLPTVLLEQLQAAGVRKHMTEDSLTEKDKTQLLEYLRKIHGAKEEKGRISLPRRQTSEIKKADSTGKPRSIQVEVRKKRVFVKGVDLPVERKTAEIPAPAAPSVPPVRTPVIDAAQQALRQEEARRQAELIARQAAELREKRLRERPPVVEIKEPEEPAPPFVPAAPVAGPEAVPVAPETPSAAPGETVAAVEAEAAPSQPASTEGTLHKPAVKPEEKADKKKKPAKQVVWKEEKVEKRGLKTRGDLSGAKGGWRARKDKHGRTEEPAPHAFSAPTEPVVHEVLVPETISVGALAQKMSIKAAEVIKALMKMGNMVTINQMLDQETAMIVVEELGHVAKYAALDSPESFLADTEIAPSELKMEARAPVVTVMGHVDHGKTSLLDYIRRTRVASGEAGGITQHIGAYHVETERGMVTFLDTPGHEAFTAMRARGAKVTDLVILVVAADDGVMPQTVEAIHHAKAGKVPIVVAMTKIDKPEANPERIRQELVTQEVVPEDWGGETMFVEVSAKTGQGIDDLLESVLLQAEVLELKAPKDAPAKGIVIESRLDKGRGPVATMLVQSGTLKRGDILLAGAAYGRVRAMLDESGKQVEQAGPSIPVEIQGLSEVPVAGESVVALTDERKAREIALFRQGKFRDVKLAKQQAAKLENVFEQRGEVKVLSLIIKADVQGSYEALTHALQQLSTDEVKVNIIHSGVGAITESDINLALASKAVVIGFNSRADAVARKLINSAGVDVRYYSIIYEAVDEIKAALSGMMAPERKENITGLLEIREVFRISKVGAVAGCLVQEGFVRRGSLVRVIRNGQVIHTGELDSLKRFKDDVKEVRAGFECGLSLKNFNDIQVGDQLETYEIQVIARTL.

Positions 164 to 288 (VEIKEPEEPA…EEPAPHAFSA (125 aa)) are disordered. Over residues 179–219 (AAPVAGPEAVPVAPETPSAAPGETVAAVEAEAAPSQPASTE) the composition is skewed to low complexity. A compositionally biased stretch (basic and acidic residues) spans 244–259 (VWKEEKVEKRGLKTRG). The tr-type G domain occupies 378 to 547 (ARAPVVTVMG…LLQAEVLELK (170 aa)). Positions 387–394 (GHVDHGKT) are G1. 387–394 (GHVDHGKT) contacts GTP. Residues 412 to 416 (GITQH) are G2. The segment at 433-436 (DTPG) is G3. GTP contacts are provided by residues 433-437 (DTPGH) and 487-490 (TKID). Residues 487–490 (TKID) form a G4 region. A G5 region spans residues 523–525 (SAK).

Belongs to the TRAFAC class translation factor GTPase superfamily. Classic translation factor GTPase family. IF-2 subfamily.

Its subcellular location is the cytoplasm. One of the essential components for the initiation of protein synthesis. Protects formylmethionyl-tRNA from spontaneous hydrolysis and promotes its binding to the 30S ribosomal subunits. Also involved in the hydrolysis of GTP during the formation of the 70S ribosomal complex. In Nitrosospira multiformis (strain ATCC 25196 / NCIMB 11849 / C 71), this protein is Translation initiation factor IF-2.